A 349-amino-acid polypeptide reads, in one-letter code: 5-deoxyribose 1-phosphate isomerase (349 aa).

Residues 49 to 51, Arg-92, and Gln-199 contribute to the substrate site; that span reads RGA. The active-site Proton donor is Asp-240. Residue 250 to 251 participates in substrate binding; sequence NK.

It belongs to the EIF-2B alpha/beta/delta subunits family. DrdI subfamily.

The catalysed reaction is 5-deoxy-alpha-D-ribose 1-phosphate = 5-deoxy-D-ribulose 1-phosphate. The protein operates within carbohydrate degradation. Catalyzes the isomerization of 5-deoxy-alpha-D-ribose 1-phosphate to 5-deoxy-D-ribulose 1-phosphate, as part of a 5-deoxyribose salvage pathway that recycles this toxic radical SAM enzyme by-product to mainstream metabolites. In Clostridium botulinum (strain Kyoto / Type A2), this protein is 5-deoxyribose 1-phosphate isomerase.